The chain runs to 207 residues: Holliday junction branch migration complex subunit RuvA (207 aa).

The tract at residues 1-63 (MIDSLHGEVL…DDGIDLYAFE (63 aa)) is domain I. The domain II stretch occupies residues 64-142 (SDEARQMFAM…VFDSGDSASE (79 aa)). The interval 143 to 154 (PQSGVGGNSEAE) is flexible linker. The segment at 155–207 (VDSGVVGTVTQALVELGFPEKQAEKTATSAAAEGGSVSEILKRALRSMSSERN) is domain III.

It belongs to the RuvA family. As to quaternary structure, homotetramer. Forms an RuvA(8)-RuvB(12)-Holliday junction (HJ) complex. HJ DNA is sandwiched between 2 RuvA tetramers; dsDNA enters through RuvA and exits via RuvB. An RuvB hexamer assembles on each DNA strand where it exits the tetramer. Each RuvB hexamer is contacted by two RuvA subunits (via domain III) on 2 adjacent RuvB subunits; this complex drives branch migration. In the full resolvosome a probable DNA-RuvA(4)-RuvB(12)-RuvC(2) complex forms which resolves the HJ.

Its subcellular location is the cytoplasm. Functionally, the RuvA-RuvB-RuvC complex processes Holliday junction (HJ) DNA during genetic recombination and DNA repair, while the RuvA-RuvB complex plays an important role in the rescue of blocked DNA replication forks via replication fork reversal (RFR). RuvA specifically binds to HJ cruciform DNA, conferring on it an open structure. The RuvB hexamer acts as an ATP-dependent pump, pulling dsDNA into and through the RuvAB complex. HJ branch migration allows RuvC to scan DNA until it finds its consensus sequence, where it cleaves and resolves the cruciform DNA. This chain is Holliday junction branch migration complex subunit RuvA, found in Corynebacterium kroppenstedtii (strain DSM 44385 / JCM 11950 / CIP 105744 / CCUG 35717).